The following is a 303-amino-acid chain: Aliphatic sulfonates import ATP-binding protein SsuB (303 aa).

An ABC transporter domain is found at 39 to 263; that stretch reads LHVRQVVKRY…ERGAAGFAQL (225 aa). 71–78 contacts ATP; sequence GRSGCGKS.

Belongs to the ABC transporter superfamily. Aliphatic sulfonates importer (TC 3.A.1.17.2) family. As to quaternary structure, the complex is composed of two ATP-binding proteins (SsuB), two transmembrane proteins (SsuC) and a solute-binding protein (SsuA).

The protein resides in the cell inner membrane. It carries out the reaction ATP + H2O + aliphatic sulfonate-[sulfonate-binding protein]Side 1 = ADP + phosphate + aliphatic sulfonateSide 2 + [sulfonate-binding protein]Side 1.. Functionally, part of the ABC transporter complex SsuABC involved in aliphatic sulfonates import. Responsible for energy coupling to the transport system. The sequence is that of Aliphatic sulfonates import ATP-binding protein SsuB from Cupriavidus necator (strain ATCC 17699 / DSM 428 / KCTC 22496 / NCIMB 10442 / H16 / Stanier 337) (Ralstonia eutropha).